A 245-amino-acid chain; its full sequence is Uridylate kinase (245 aa).

12-15 (KLSG) contributes to the ATP binding site. The segment at 20–25 (GERGVG) is involved in allosteric activation by GTP. G54 lines the UMP pocket. Residues G55 and R59 each contribute to the ATP site. UMP is bound by residues D74 and 135–142 (IGSPYFST). Residues N163, Y169, and D172 each coordinate ATP.

Belongs to the UMP kinase family. In terms of assembly, homohexamer.

It is found in the cytoplasm. It carries out the reaction UMP + ATP = UDP + ADP. The protein operates within pyrimidine metabolism; CTP biosynthesis via de novo pathway; UDP from UMP (UMPK route): step 1/1. Its activity is regulated as follows. Allosterically activated by GTP. Inhibited by UTP. Functionally, catalyzes the reversible phosphorylation of UMP to UDP. This chain is Uridylate kinase, found in Streptococcus pneumoniae serotype 2 (strain D39 / NCTC 7466).